The primary structure comprises 579 residues: Probable cytochrome c oxidase subunit 1-alpha (579 aa).

A disordered region spans residues 1–21 (MSILNEPQGAAAAEDSYENEL). A helical membrane pass occupies residues 44–64 (IGTLYLVTSFAFFCIGGVMAL). A Fe(II)-heme a-binding site is contributed by histidine 90. A run of 6 helical transmembrane segments spans residues 93–113 (IMLL…IMPL), 125–145 (LNMF…GGFL), 174–194 (MWIM…VNFI), 217–237 (VLLT…ALFA), 262–282 (LFWF…FGII), and 295–315 (FGYM…VTVW). Cu cation-binding residues include histidine 268 and tyrosine 272. The segment at residues 268–272 (HPEVY) is a cross-link (1'-histidyl-3'-tyrosine (His-Tyr)). Residues histidine 317 and histidine 318 each coordinate Cu cation. The next 5 helical transmembrane spans lie at 319 to 339 (MYVT…LIAV), 363 to 383 (MLWA…GVIL), 397 to 417 (FVVA…MFSG), 437 to 457 (ITFW…HWLG), and 480 to 500 (ISTI…YNVW). Histidine 401 provides a ligand contact to heme a3. Histidine 403 lines the Fe(II)-heme a pocket.

The protein belongs to the heme-copper respiratory oxidase family. Associates with subunits II, III and IV to form cytochrome c oxidase. Cu(2+) is required as a cofactor. It depends on heme as a cofactor.

It localises to the cell membrane. It carries out the reaction 4 Fe(II)-[cytochrome c] + O2 + 8 H(+)(in) = 4 Fe(III)-[cytochrome c] + 2 H2O + 4 H(+)(out). It functions in the pathway energy metabolism; oxidative phosphorylation. Its function is as follows. Cytochrome c oxidase is the component of the respiratory chain that catalyzes the reduction of oxygen to water. Subunits 1-3 form the functional core of the enzyme complex. CO I is the catalytic subunit of the enzyme. Electrons originating in cytochrome c are transferred via the copper A center of subunit 2 and heme A of subunit 1 to the bimetallic center formed by heme A3 and copper B. The protein is Probable cytochrome c oxidase subunit 1-alpha (ctaD1) of Streptomyces avermitilis (strain ATCC 31267 / DSM 46492 / JCM 5070 / NBRC 14893 / NCIMB 12804 / NRRL 8165 / MA-4680).